Consider the following 488-residue polypeptide: Patatin-like protein 7 (488 aa).

Residues 23–49 are disordered; it reads QRGGDGATAASKSANDYNNNDSLLTDM. A compositionally biased stretch (polar residues) spans 32 to 47; the sequence is ASKSANDYNNNDSLLT. The region spanning 101-301 is the PNPLA domain; it reads LSIDGGGMRG…AMSNPTAAAI (201 aa). The GXGXXG signature appears at 105 to 110; sequence GGGMRG. Ser-145 (nucleophile) is an active-site residue.

It belongs to the patatin family. Highly expressed in roots and at lower levels in leaves, stems, flowers and siliques.

The protein localises to the cell membrane. Its function is as follows. Possesses non-specific lipolytic acyl hydrolase (LAH) activity. Catalyzes the hydrolysis of the galactolipids monogalactosyldiacylglycerol (MGDG) and digalactosyldiacylglycerol (DGDG), and the phoshpolipids phosphatidylcholine (PC), phosphatidylethanolamine (PE), phosphatidylglycerol (PG), phosphatidic acid (PA), phosphatidylserine (PS). Favors the release of fatty acid at the sn-2 position for PC. Possesses acyl-CoA thioesterase activity. Negatively affects disease resistance to the necrotic fungal pathogen Botrytis cinerea and the avirulent bacteria Pseudomonas syringae by promoting cell death and reducing the efficiency of the hypersensitive response, respectively. However, PLP2 contributes to resistance to cucumber mosaic virus (CMV), an obligate parasite inducing hypersensitive response. May negatively regulate oxylipin production, possibly via participating in membrane repair that includes removal of oxidatively modified lipids. Enzymatic products of PLP2 may influence cellulose content and cell elongation. The chain is Patatin-like protein 7 (PLP7) from Arabidopsis thaliana (Mouse-ear cress).